We begin with the raw amino-acid sequence, 72 residues long: GSTLLEQMSLHGVRHAPGSLEANDFFLANDQRHGALGSFVRADEHDLSTLGDHPLRSHGGLSEQQLPLLLSR.

Monomer. Unlike bacterial phosphonoacetate hydrolase, does not require zinc as a cofactor. serves as cofactor.

It catalyses the reaction phosphonoacetate + H2O = acetate + phosphate + H(+). Unaffected by EDTA or Ca(2+), Co(2+), Cu(2+), Mg(2+), Mn(2+), Ni(2+) and Zn(2+). This Penicillium oxalicum protein is Phosphonoacetate hydrolase.